A 323-amino-acid chain; its full sequence is Formimidoylglutamase (323 aa).

Residues His-131, Asp-157, His-159, Asp-161, Cys-245, and Asp-247 each coordinate Mn(2+).

It belongs to the arginase family. Mn(2+) is required as a cofactor.

It carries out the reaction N-formimidoyl-L-glutamate + H2O = formamide + L-glutamate. The protein operates within amino-acid degradation; L-histidine degradation into L-glutamate; L-glutamate from N-formimidoyl-L-glutamate (hydrolase route): step 1/1. In terms of biological role, catalyzes the conversion of N-formimidoyl-L-glutamate to L-glutamate and formamide. This Geobacillus kaustophilus (strain HTA426) protein is Formimidoylglutamase.